The chain runs to 578 residues: Septation ring formation regulator EzrA (578 aa).

Residues 1-8 (MKNNWIII) lie on the Extracellular side of the membrane. The helical transmembrane segment at 9-27 (LVLVIVIIAAVLYLIGYFM) threads the bilayer. Residues 28–578 (RKKNQEQLDE…NINNPNLTAI (551 aa)) lie on the Cytoplasmic side of the membrane. 3 coiled-coil regions span residues 103–165 (RFMK…DDKA), 256–285 (QNFA…AAVE), and 394–490 (KILD…DDLE).

Belongs to the EzrA family.

Its subcellular location is the cell membrane. In terms of biological role, negative regulator of FtsZ ring formation; modulates the frequency and position of FtsZ ring formation. Inhibits FtsZ ring formation at polar sites. Interacts either with FtsZ or with one of its binding partners to promote depolymerization. The protein is Septation ring formation regulator EzrA of Enterococcus faecalis (strain ATCC 700802 / V583).